Here is a 319-residue protein sequence, read N- to C-terminus: NADH-quinone oxidoreductase subunit H 2 (319 aa).

The next 9 helical transmembrane spans lie at 1 to 21 (MIGMIITATISVALIMVLLVL), 77 to 97 (ILAPAVAATPVLAGFGVVAIG), 107 to 127 (VGLLFLLGMLGLTAYAAVLGA), 147 to 167 (LAYEVFLGLSLMGVVMIAGSF), 179 to 199 (VWFVVLQPLGMALFTIAGIAA), 214 to 234 (LIAGFITEYTGMSFGLFFLGE), 238 to 258 (VLLVSALAVTLFFGGWLGPWL), 262 to 282 (VWFGLKTAVIAVAFVWIRATL), and 293 to 313 (FAWKVALPLSLLNLMLTGIVV).

This sequence belongs to the complex I subunit 1 family. NDH-1 is composed of 14 different subunits. Subunits NuoA, H, J, K, L, M, N constitute the membrane sector of the complex.

The protein localises to the cell inner membrane. The catalysed reaction is a quinone + NADH + 5 H(+)(in) = a quinol + NAD(+) + 4 H(+)(out). Its function is as follows. NDH-1 shuttles electrons from NADH, via FMN and iron-sulfur (Fe-S) centers, to quinones in the respiratory chain. The immediate electron acceptor for the enzyme in this species is believed to be ubiquinone. Couples the redox reaction to proton translocation (for every two electrons transferred, four hydrogen ions are translocated across the cytoplasmic membrane), and thus conserves the redox energy in a proton gradient. This subunit may bind ubiquinone. This is NADH-quinone oxidoreductase subunit H 2 from Rhodopseudomonas palustris (strain ATCC BAA-98 / CGA009).